A 443-amino-acid chain; its full sequence is MASTSPATTNGDVAPANYDLVLKLAPHLDRHMIFPLLEFNAGRLKEDETDKAREILAAKYALLKKTNMTDYVANLYCELEGLKEPPAEYAERRQKVFHQLEKYEQETAKITELLQRDDVVNNLRSDKVANLEFLKKEHDVTIDMVNALYDFGQLQYSCGNYADASELLYRFRVLSTDNDKVSYATWGRLACEILTMNWESAMEELQKVRESIDTRLANNPLAQLQHRTELVHWALFPLFNYDKAREPLLDLFFNAGFINTIQANSPWILRYLTVAVITNRGRAKNAGVHQKQMKDVVRIVKQEAYEYQDPITRFVHALCIDFDFEEAQQQLVLAEEVLRSDFFLLAHADDFVDSARHLIFESYCKIHARISLKDLSARLGLNNDDAEKWIVNLIRDTRLDAKIDYKEGTVVMNHPPSSVYQQVIERTKGGFFRTQVLTAAVAR.

A PCI domain is found at 249–417 (LDLFFNAGFI…GTVVMNHPPS (169 aa)).

It belongs to the eIF-3 subunit E family. Component of the eukaryotic translation initiation factor 3 (eIF-3) complex.

It is found in the cytoplasm. In terms of biological role, component of the eukaryotic translation initiation factor 3 (eIF-3) complex, which is involved in protein synthesis of a specialized repertoire of mRNAs and, together with other initiation factors, stimulates binding of mRNA and methionyl-tRNAi to the 40S ribosome. The eIF-3 complex specifically targets and initiates translation of a subset of mRNAs involved in cell proliferation. This Neurospora crassa (strain ATCC 24698 / 74-OR23-1A / CBS 708.71 / DSM 1257 / FGSC 987) protein is Eukaryotic translation initiation factor 3 subunit E (int-6).